The chain runs to 507 residues: Archaeal-type glutamate synthase [NADPH] (507 aa).

4Fe-4S ferredoxin-type domains are found at residues 10–39 (FVVE…YDEN) and 41–70 (NRVY…VRRN). C19, C22, C25, C29, C50, C53, C56, and C60 together coordinate [4Fe-4S] cluster.

The protein belongs to the glutamate synthase family. Requires FMN as cofactor.

It carries out the reaction 2 L-glutamate + NADP(+) = L-glutamine + 2-oxoglutarate + NADPH + H(+). The chain is Archaeal-type glutamate synthase [NADPH] from Thermotoga neapolitana (strain ATCC 49049 / DSM 4359 / NBRC 107923 / NS-E).